A 520-amino-acid polypeptide reads, in one-letter code: Glucose-1-phosphate adenylyltransferase small subunit, chloroplastic (520 aa).

A chloroplast-targeting transit peptide spans 1–71 (MASVSAIGVL…RNPIIVSPKA (71 aa)).

It belongs to the bacterial/plant glucose-1-phosphate adenylyltransferase family. Heterotetramer. In terms of tissue distribution, leaves.

The protein resides in the plastid. The protein localises to the chloroplast. The enzyme catalyses alpha-D-glucose 1-phosphate + ATP + H(+) = ADP-alpha-D-glucose + diphosphate. It functions in the pathway glycan biosynthesis; starch biosynthesis. Activated by 3'phosphoglycerate, inhibited by orthophosphate. Allosteric regulation. This protein plays a role in synthesis of starch. It catalyzes the synthesis of the activated glycosyl donor, ADP-glucose from Glc-1-P and ATP. This chain is Glucose-1-phosphate adenylyltransferase small subunit, chloroplastic (APS1), found in Arabidopsis thaliana (Mouse-ear cress).